Here is a 528-residue protein sequence, read N- to C-terminus: Probable methylmalonate-semialdehyde/malonate-semialdehyde dehydrogenase [acylating], mitochondrial (528 aa).

Residues M1 to L26 constitute a mitochondrion transit peptide. F175, K199, E202, and R203 together coordinate NAD(+). Catalysis depends on C307, which acts as the Nucleophile. E408 provides a ligand contact to NAD(+).

The protein belongs to the aldehyde dehydrogenase family. In terms of assembly, homotetramer.

The protein localises to the mitochondrion. It carries out the reaction 2-methyl-3-oxopropanoate + NAD(+) + CoA + H2O = propanoyl-CoA + hydrogencarbonate + NADH + H(+). The enzyme catalyses 3-oxopropanoate + NAD(+) + CoA + H2O = hydrogencarbonate + acetyl-CoA + NADH + H(+). Probable malonate and methylmalonate semialdehyde dehydrogenase involved in the catabolism of valine, thymine, and compounds catabolized by way of beta-alanine, including uracil and cytidine. This Dictyostelium discoideum (Social amoeba) protein is Probable methylmalonate-semialdehyde/malonate-semialdehyde dehydrogenase [acylating], mitochondrial (mmsdh).